Here is a 427-residue protein sequence, read N- to C-terminus: Glutamate-1-semialdehyde 2,1-aminomutase (427 aa).

Lys266 bears the N6-(pyridoxal phosphate)lysine mark.

It belongs to the class-III pyridoxal-phosphate-dependent aminotransferase family. HemL subfamily. As to quaternary structure, homodimer. Requires pyridoxal 5'-phosphate as cofactor.

Its subcellular location is the cytoplasm. It carries out the reaction (S)-4-amino-5-oxopentanoate = 5-aminolevulinate. It functions in the pathway porphyrin-containing compound metabolism; protoporphyrin-IX biosynthesis; 5-aminolevulinate from L-glutamyl-tRNA(Glu): step 2/2. The sequence is that of Glutamate-1-semialdehyde 2,1-aminomutase from Dechloromonas aromatica (strain RCB).